We begin with the raw amino-acid sequence, 541 residues long: uncharacterized protein (541 aa).

The next 5 membrane-spanning stretches (helical) occupy residues 10 to 32, 39 to 57, 62 to 84, 91 to 113, and 146 to 168; these read LNNQ…KINI, SSAI…YTLP, TLGL…FFSL, LSLG…TYLF, and APAA…IQII. RCK C-terminal domains are found at residues 183–260 and 268–352; these read LNKE…DDLE and TPVD…IFGN. Helical transmembrane passes span 357–375, 385–407, 428–447, 452–474, 481–500, and 515–537; these read SYNF…GFIL, SGIF…SNIY, GLVL…ILAT, GLQL…VFIC, PFLS…PGLA, and YATV…IFIV.

This sequence belongs to the AAE transporter (TC 2.A.81) family.

Its subcellular location is the cell membrane. This is an uncharacterized protein from Desulfotalea psychrophila (strain LSv54 / DSM 12343).